A 201-amino-acid chain; its full sequence is Small ribosomal subunit protein uS4c (201 aa).

The S4 RNA-binding domain occupies 89-157 (MRLDNILFRL…VQNYIASSDP (69 aa)).

Belongs to the universal ribosomal protein uS4 family. Part of the 30S ribosomal subunit. Contacts protein S5. The interaction surface between S4 and S5 is involved in control of translational fidelity.

Its subcellular location is the plastid. The protein resides in the chloroplast. Its function is as follows. One of the primary rRNA binding proteins, it binds directly to 16S rRNA where it nucleates assembly of the body of the 30S subunit. In terms of biological role, with S5 and S12 plays an important role in translational accuracy. The chain is Small ribosomal subunit protein uS4c (rps4) from Triticum aestivum (Wheat).